The primary structure comprises 262 residues: Plant intracellular Ras-group-related LRR protein 7 (262 aa).

9 LRR repeats span residues 19-42, 43-66, 68-89, 90-112, 113-135, 137-158, 159-181, 182-204, and 206-231; these read WRST…VLQV, GNSL…VGTL, NMQR…IGYL, RNLK…LGSL, SNLQ…VGDL, NMLL…IGGC, SSLE…ICNL, VCLK…LLKD, and KALQ…GFTE.

Belongs to the SHOC2 family. In terms of tissue distribution, widely expressed and preferentially in leaf sheathes.

In terms of biological role, leucine-rich repeat protein that likely mediates protein interactions, possibly in the context of signal transduction. The polypeptide is Plant intracellular Ras-group-related LRR protein 7 (IRL7) (Oryza sativa subsp. japonica (Rice)).